We begin with the raw amino-acid sequence, 127 residues long: Glycine cleavage system H protein (127 aa).

The 83-residue stretch at 22-104 (QVVIGITHFA…YEGAWMVKVE (83 aa)) folds into the Lipoyl-binding domain. Lys-63 bears the N6-lipoyllysine mark.

The protein belongs to the GcvH family. As to quaternary structure, the glycine cleavage system is composed of four proteins: P, T, L and H. Requires (R)-lipoate as cofactor.

The glycine cleavage system catalyzes the degradation of glycine. The H protein shuttles the methylamine group of glycine from the P protein to the T protein. In terms of biological role, is also involved in protein lipoylation via its role as an octanoyl/lipoyl carrier protein intermediate. The polypeptide is Glycine cleavage system H protein (Bacillus cytotoxicus (strain DSM 22905 / CIP 110041 / 391-98 / NVH 391-98)).